The primary structure comprises 300 residues: UDP-N-acetylenolpyruvoylglucosamine reductase (300 aa).

The 165-residue stretch at 30 to 194 folds into the FAD-binding PCMH-type domain; it reads KVGGPADFFA…LAAVFSLAAG (165 aa). Residue Arg-174 is part of the active site. Ser-223 acts as the Proton donor in catalysis. Glu-293 is a catalytic residue.

This sequence belongs to the MurB family. FAD is required as a cofactor.

The protein resides in the cytoplasm. The catalysed reaction is UDP-N-acetyl-alpha-D-muramate + NADP(+) = UDP-N-acetyl-3-O-(1-carboxyvinyl)-alpha-D-glucosamine + NADPH + H(+). Its pathway is cell wall biogenesis; peptidoglycan biosynthesis. In terms of biological role, cell wall formation. In Geotalea uraniireducens (strain Rf4) (Geobacter uraniireducens), this protein is UDP-N-acetylenolpyruvoylglucosamine reductase.